Here is a 284-residue protein sequence, read N- to C-terminus: Pantothenate synthetase (284 aa).

Residue 30-37 (MGNLHNAH) coordinates ATP. Catalysis depends on histidine 37, which acts as the Proton donor. (R)-pantoate is bound at residue glutamine 61. Glutamine 61 contacts beta-alanine. Residue 149–152 (GIKD) coordinates ATP. Glutamine 155 contacts (R)-pantoate. Residues valine 178 and 186 to 189 (MSSR) contribute to the ATP site.

Belongs to the pantothenate synthetase family. In terms of assembly, homodimer.

The protein resides in the cytoplasm. It catalyses the reaction (R)-pantoate + beta-alanine + ATP = (R)-pantothenate + AMP + diphosphate + H(+). Its pathway is cofactor biosynthesis; (R)-pantothenate biosynthesis; (R)-pantothenate from (R)-pantoate and beta-alanine: step 1/1. Functionally, catalyzes the condensation of pantoate with beta-alanine in an ATP-dependent reaction via a pantoyl-adenylate intermediate. The polypeptide is Pantothenate synthetase (Saccharophagus degradans (strain 2-40 / ATCC 43961 / DSM 17024)).